We begin with the raw amino-acid sequence, 184 residues long: Gastrokine-2 (184 aa).

A signal peptide spans 1-20; it reads MKSLVAFLVVLSILRIQSQA. Residues 54–151 enclose the BRICHOS domain; it reads HSGSCSSTTI…LCKHIPLYEG (98 aa). A disulfide bridge links Cys-81 with Cys-143.

In terms of assembly, heterodimer with TFF1; disulfide linked. Interacts with TFF2.

It is found in the secreted. This chain is Gastrokine-2 (Gkn2), found in Rattus norvegicus (Rat).